The primary structure comprises 169 residues: MAAPIKFPFRPRGGQPREDTTPKRGLRRYLLELKESNKEFWLSGHAVFKLLSLGCMISALDYFETMLPHPVLILLICMEAAICIFFIFLNTLAINRYIPFVFWPMADIFNSLFSCVFLGGGIYFAFKARRLLPKPYLTAMILMGAAAICSFIDMLLQFQHFRGLRLRKW.

4 consecutive transmembrane segments (helical) span residues 40-60 (FWLSGHAVFKLLSLGCMISAL), 69-89 (HPVLILLICMEAAICIFFIFL), 98-118 (IPFVFWPMADIFNSLFSCVFL), and 136-156 (YLTAMILMGAAAICSFIDMLL). One can recognise an MARVEL domain in the interval 40-162 (FWLSGHAVFK…DMLLQFQHFR (123 aa)).

This sequence belongs to the chemokine-like factor family.

It localises to the membrane. The chain is CKLF-like MARVEL transmembrane domain-containing protein 2A (Cmtm2a) from Mus musculus (Mouse).